We begin with the raw amino-acid sequence, 178 residues long: Large ribosomal subunit protein uL13m (178 aa).

This sequence belongs to the universal ribosomal protein uL13 family. In terms of assembly, component of the mitochondrial ribosome large subunit (39S) which comprises a 16S rRNA and about 50 distinct proteins. Interacts with OXA1L.

It localises to the mitochondrion. The polypeptide is Large ribosomal subunit protein uL13m (MRPL13) (Bos taurus (Bovine)).